Consider the following 612-residue polypeptide: Threonine--tRNA ligase (612 aa).

Positions 218–509 are catalytic; sequence DHRKLGVELG…LSEHFGGNFP (292 aa). Positions 310, 361, and 486 each coordinate Zn(2+).

Belongs to the class-II aminoacyl-tRNA synthetase family. Homodimer. The cofactor is Zn(2+).

The protein localises to the cytoplasm. It carries out the reaction tRNA(Thr) + L-threonine + ATP = L-threonyl-tRNA(Thr) + AMP + diphosphate + H(+). In terms of biological role, catalyzes the attachment of threonine to tRNA(Thr) in a two-step reaction: L-threonine is first activated by ATP to form Thr-AMP and then transferred to the acceptor end of tRNA(Thr). Also edits incorrectly charged L-seryl-tRNA(Thr). In Helicobacter pylori (strain ATCC 700392 / 26695) (Campylobacter pylori), this protein is Threonine--tRNA ligase.